Reading from the N-terminus, the 821-residue chain is DNA replication licensing factor MCM6 (821 aa).

At Met-1 the chain carries N-acetylmethionine. Phosphoserine is present on residues Ser-13, Ser-219, and Ser-271. Thr-278 bears the Phosphothreonine mark. In terms of domain architecture, MCM spans 346–553; sequence LYHNLCTSLF…TDYAIARRIV (208 aa). Positions 359, 399, 400, 401, 402, 403, and 504 each coordinate ATP. The short motif at 528 to 531 is the Arginine finger element; it reads SRFD. ADP is bound by residues Arg-619 and Glu-622. An N6-acetyllysine modification is found at Lys-643. The disordered stretch occupies residues 676–706; the sequence is VDEGPDGINGHADSPAPASGINGHSEDMNQD. 2 positions are modified to phosphoserine: Ser-689 and Ser-762. The residue at position 791 (Thr-791) is a Phosphothreonine.

It belongs to the MCM family. As to quaternary structure, component of the MCM2-7 complex. The complex forms a toroidal hexameric ring with the proposed subunit order MCM2-MCM6-MCM4-MCM7-MCM3-MCM5. Component of the CMG helicase complex, a hexameric ring of related MCM2-7 subunits stabilized by CDC45 and the tetrameric GINS complex. May interact with MCM10. Interacts with TIPIN. Interacts with CDT1. Interacts with MCMBP. Interacts with DDI2. In terms of processing, O-glycosylated (O-GlcNAcylated), in a cell cycle-dependent manner.

It localises to the nucleus. The protein localises to the chromosome. It carries out the reaction ATP + H2O = ADP + phosphate + H(+). In terms of biological role, acts as a component of the MCM2-7 complex (MCM complex) which is the replicative helicase essential for 'once per cell cycle' DNA replication initiation and elongation in eukaryotic cells. Core component of CDC45-MCM-GINS (CMG) helicase, the molecular machine that unwinds template DNA during replication, and around which the replisome is built. The active ATPase sites in the MCM2-7 ring are formed through the interaction surfaces of two neighboring subunits such that a critical structure of a conserved arginine finger motif is provided in trans relative to the ATP-binding site of the Walker A box of the adjacent subunit. The six ATPase active sites, however, are likely to contribute differentially to the complex helicase activity. In Bos taurus (Bovine), this protein is DNA replication licensing factor MCM6 (MCM6).